Reading from the N-terminus, the 597-residue chain is Proteasome-associated ATPase (597 aa).

The segment covering 1–12 (MQHDRPGSRPEE) has biased composition (basic and acidic residues). Residues 1 to 22 (MQHDRPGSRPEEGGEQQIGGDA) form a disordered region. Residues 21–97 (DAELNSQIRL…REEVDRLAQP (77 aa)) adopt a coiled-coil conformation. Residue 284–289 (GCGKTL) participates in ATP binding. Residues 596-597 (YL) form a docks into pockets in the proteasome alpha-ring region.

Belongs to the AAA ATPase family. Homohexamer. Assembles into a hexameric ring structure that caps the 20S proteasome core. Strongly interacts with the prokaryotic ubiquitin-like protein Pup through a hydrophobic interface; the interacting region of ARC lies in its N-terminal coiled-coil domain. There is one Pup binding site per ARC hexamer ring. Upon ATP-binding, the C-terminus of ARC interacts with the alpha-rings of the proteasome core, possibly by binding to the intersubunit pockets.

It functions in the pathway protein degradation; proteasomal Pup-dependent pathway. Functionally, ATPase which is responsible for recognizing, binding, unfolding and translocation of pupylated proteins into the bacterial 20S proteasome core particle. May be essential for opening the gate of the 20S proteasome via an interaction with its C-terminus, thereby allowing substrate entry and access to the site of proteolysis. Thus, the C-termini of the proteasomal ATPase may function like a 'key in a lock' to induce gate opening and therefore regulate proteolysis. This is Proteasome-associated ATPase from Saccharopolyspora erythraea (strain ATCC 11635 / DSM 40517 / JCM 4748 / NBRC 13426 / NCIMB 8594 / NRRL 2338).